Reading from the N-terminus, the 353-residue chain is Protein Wnt-11b-2 (353 aa).

A signal peptide spans 1 to 22 (MALIRHCVTLLLILCCSRLCGA). N-linked (GlcNAc...) asparagine glycosylation is found at asparagine 31, asparagine 38, and asparagine 88. 5 disulfides stabilise this stretch: cysteine 78–cysteine 89, cysteine 128–cysteine 136, cysteine 138–cysteine 155, cysteine 208–cysteine 222, and cysteine 210–cysteine 217. The O-palmitoleoyl serine; by PORCN moiety is linked to residue serine 214. Residues tyrosine 274 and tyrosine 281 each carry the sulfotyrosine modification. 6 cysteine pairs are disulfide-bonded: cysteine 282–cysteine 313, cysteine 298–cysteine 308, cysteine 312–cysteine 352, cysteine 328–cysteine 343, cysteine 330–cysteine 340, and cysteine 335–cysteine 336. Asparagine 299 carries an N-linked (GlcNAc...) asparagine glycan.

Belongs to the Wnt family. As to quaternary structure, homodimer. Secreted homodimers form a complex with wnt5a homodimers; tyrosine sulfation of both wnt11 and wnt5a by tpst1 is required for this interaction. Interacts with the transmembrane receptor fzd7/fz7. Interacts with lrp6 and ryk. Interacts with tdgf1/frl1. Interacts weakly with frzb1 and strongly with frzb2/crescent. Interaction with frzb2/crescent antagonizes wnt11 function in the neuroectoderm, but enhances it in mesodermal tissue. Glycosylation is required for protein secretion. In terms of processing, palmitoleoylation is required for efficient binding to frizzled receptors. Depalmitoleoylation leads to Wnt signaling pathway inhibition.

The protein resides in the secreted. It localises to the extracellular space. The protein localises to the extracellular matrix. Its function is as follows. Ligand for the frizzled7 transmembrane receptor. Primarily acts via non-canonical Wnt pathways mediated by either Ca(2+) and PKC, or by JNK and dvl2/dsh. Depending on the cellular context, can also signal via the canonical Wnt pathway mediated by beta-catenin and dvl2/dsh. May also inhibit canonical Wnt signaling. Maternally initiates dorsal/ventral axis formation by a canonical route, which signals via lrp6. In a complex with wnt5a, activates the canonical and non-canonical processes involved in axis formation. In the non-canonical pathway, acts through fzd7/fz7 to induce phosphorylation of dvl2/dsh. Signals through a non-canonical Wnt pathway to regulate convergent extension movements during gastrulation. Interactions with the secreted Wnt antagonist sfrp5 to coordinate foregut development, acting via a non-canonical wnt pathway whereby sfrp5 restricts wnt11b activity to prevent inappropriate foregut formation. Mediates cardiogenesis via non-canonical Wnt signaling involving JNK-activation and PKC. Acts redundantly with wnt11/wnt11r during pronephros induction. This Xenopus tropicalis (Western clawed frog) protein is Protein Wnt-11b-2.